The chain runs to 320 residues: ATP-dependent 6-phosphofructokinase (320 aa).

An ATP-binding site is contributed by Gly12. Residues 22–26 (RGVVR) and 55–60 (RYSVSD) contribute to the ADP site. Residues 73–74 (RF) and 103–106 (GDGS) contribute to the ATP site. Residue Asp104 participates in Mg(2+) binding. Residue 126–128 (TID) coordinates substrate. The active-site Proton acceptor is the Asp128. Arg155 lines the ADP pocket. Residues Arg163 and 170–172 (MGR) each bind substrate. Residues 186–188 (GCE), Lys212, and 214–216 (KKH) contribute to the ADP site. Substrate is bound by residues Glu223, Arg244, and 250 to 253 (HIQR).

Belongs to the phosphofructokinase type A (PFKA) family. ATP-dependent PFK group I subfamily. Prokaryotic clade 'B1' sub-subfamily. As to quaternary structure, homotetramer. Mg(2+) is required as a cofactor.

The protein localises to the cytoplasm. It catalyses the reaction beta-D-fructose 6-phosphate + ATP = beta-D-fructose 1,6-bisphosphate + ADP + H(+). It functions in the pathway carbohydrate degradation; glycolysis; D-glyceraldehyde 3-phosphate and glycerone phosphate from D-glucose: step 3/4. Its activity is regulated as follows. Allosterically activated by ADP and other diphosphonucleosides, and allosterically inhibited by phosphoenolpyruvate. Its function is as follows. Catalyzes the phosphorylation of D-fructose 6-phosphate to fructose 1,6-bisphosphate by ATP, the first committing step of glycolysis. This chain is ATP-dependent 6-phosphofructokinase, found in Klebsiella pneumoniae (strain 342).